The following is a 460-amino-acid chain: Phosphomethylpyrimidine synthase (460 aa).

Substrate-binding positions include Asn-80, Met-109, Tyr-139, His-175, 195–197, 236–239, and Glu-275; these read SRG and DSLR. His-279 contacts Zn(2+). Tyr-302 provides a ligand contact to substrate. His-343 is a Zn(2+) binding site. Residues Cys-423, Cys-426, and Cys-431 each contribute to the [4Fe-4S] cluster site.

This sequence belongs to the ThiC family. [4Fe-4S] cluster is required as a cofactor.

It catalyses the reaction 5-amino-1-(5-phospho-beta-D-ribosyl)imidazole + S-adenosyl-L-methionine = 4-amino-2-methyl-5-(phosphooxymethyl)pyrimidine + CO + 5'-deoxyadenosine + formate + L-methionine + 3 H(+). Its pathway is cofactor biosynthesis; thiamine diphosphate biosynthesis. Functionally, catalyzes the synthesis of the hydroxymethylpyrimidine phosphate (HMP-P) moiety of thiamine from aminoimidazole ribotide (AIR) in a radical S-adenosyl-L-methionine (SAM)-dependent reaction. The chain is Phosphomethylpyrimidine synthase from Microcystis aeruginosa (strain NIES-843 / IAM M-2473).